A 450-amino-acid chain; its full sequence is Phosphomethylpyrimidine synthase (450 aa).

Substrate is bound by residues asparagine 80, methionine 109, tyrosine 138, histidine 173, 193–195 (SRG), 234–237 (DSLR), and glutamate 273. Histidine 277 is a Zn(2+) binding site. A substrate-binding site is contributed by tyrosine 300. Histidine 341 is a Zn(2+) binding site. [4Fe-4S] cluster contacts are provided by cysteine 421, cysteine 424, and cysteine 429.

It belongs to the ThiC family. In terms of assembly, homodimer. The cofactor is [4Fe-4S] cluster.

It catalyses the reaction 5-amino-1-(5-phospho-beta-D-ribosyl)imidazole + S-adenosyl-L-methionine = 4-amino-2-methyl-5-(phosphooxymethyl)pyrimidine + CO + 5'-deoxyadenosine + formate + L-methionine + 3 H(+). The protein operates within cofactor biosynthesis; thiamine diphosphate biosynthesis. Functionally, catalyzes the synthesis of the hydroxymethylpyrimidine phosphate (HMP-P) moiety of thiamine from aminoimidazole ribotide (AIR) in a radical S-adenosyl-L-methionine (SAM)-dependent reaction. The chain is Phosphomethylpyrimidine synthase from Campylobacter fetus subsp. fetus (strain 82-40).